A 602-amino-acid polypeptide reads, in one-letter code: (R)-limonene synthase (602 aa).

Mg(2+)-binding residues include Asp356, Asp360, Asp500, Thr504, and Glu508. Positions 356–360 (DDVYD) match the DDXXD motif motif.

Belongs to the terpene synthase family. Mg(2+) is required as a cofactor. Requires Mn(2+) as cofactor.

It catalyses the reaction (2E)-geranyl diphosphate = (4R)-limonene + diphosphate. Catalyzes the formation of (R)-(+)-limonene, terpinolene, (1R,5S)-(+)-camphene, (1R,5R)-(+)-alpha-pinene, beta-myrcene and traces of alpha-phellandrene. The chain is (R)-limonene synthase from Lavandula angustifolia (Lavender).